The sequence spans 410 residues: Serine hydroxymethyltransferase (410 aa).

(6S)-5,6,7,8-tetrahydrofolate is bound by residues leucine 119 and 123–125; that span reads GHL. An N6-(pyridoxal phosphate)lysine modification is found at lysine 228. 351-353 is a binding site for (6S)-5,6,7,8-tetrahydrofolate; the sequence is SPF.

The protein belongs to the SHMT family. In terms of assembly, homodimer. Requires pyridoxal 5'-phosphate as cofactor.

Its subcellular location is the cytoplasm. The enzyme catalyses (6R)-5,10-methylene-5,6,7,8-tetrahydrofolate + glycine + H2O = (6S)-5,6,7,8-tetrahydrofolate + L-serine. It functions in the pathway one-carbon metabolism; tetrahydrofolate interconversion. Its pathway is amino-acid biosynthesis; glycine biosynthesis; glycine from L-serine: step 1/1. Its function is as follows. Catalyzes the reversible interconversion of serine and glycine with tetrahydrofolate (THF) serving as the one-carbon carrier. This reaction serves as the major source of one-carbon groups required for the biosynthesis of purines, thymidylate, methionine, and other important biomolecules. Also exhibits THF-independent aldolase activity toward beta-hydroxyamino acids, producing glycine and aldehydes, via a retro-aldol mechanism. The sequence is that of Serine hydroxymethyltransferase from Clostridium perfringens (strain ATCC 13124 / DSM 756 / JCM 1290 / NCIMB 6125 / NCTC 8237 / Type A).